The following is a 340-amino-acid chain: uncharacterized protein (340 aa).

Residues 6-26 traverse the membrane as a helical segment; sequence ITFGLLVLMVCVILFVLYVQL.

It localises to the cell membrane. This is an uncharacterized protein from Bacillus subtilis (strain 168).